The sequence spans 207 residues: Transcription factor bHLH149 (207 aa).

A disordered region spans residues Met1–Glu25. The bHLH domain occupies Lys132–Leu181.

Homodimer. Interacts with PRE3.

The protein resides in the nucleus. Its function is as follows. Atypical bHLH transcription factor probably unable to bind DNA. Negatively regulates brassinosteroid signaling. The polypeptide is Transcription factor bHLH149 (BHLH149) (Arabidopsis thaliana (Mouse-ear cress)).